The sequence spans 174 residues: Co-chaperone protein HscB homolog (174 aa).

The 73-residue stretch at N2–L74 folds into the J domain.

The protein belongs to the HscB family. Interacts with HscA and stimulates its ATPase activity.

Functionally, co-chaperone involved in the maturation of iron-sulfur cluster-containing proteins. Seems to help targeting proteins to be folded toward HscA. The sequence is that of Co-chaperone protein HscB homolog from Shewanella baltica (strain OS185).